The following is a 449-amino-acid chain: 23S rRNA (uracil(1939)-C(5))-methyltransferase RlmD (449 aa).

In terms of domain architecture, TRAM spans 12–70 (SKQLSAKQSFSVHQLDHLGAGIAQHQGKVVFIPGALPSETVQAQLTEQKKNYARAKLIK). Positions 83, 89, 92, and 170 each coordinate [4Fe-4S] cluster. Positions 282, 311, 316, 332, 359, and 379 each coordinate S-adenosyl-L-methionine. Cys-405 (nucleophile) is an active-site residue.

Belongs to the class I-like SAM-binding methyltransferase superfamily. RNA M5U methyltransferase family. RlmD subfamily.

The catalysed reaction is uridine(1939) in 23S rRNA + S-adenosyl-L-methionine = 5-methyluridine(1939) in 23S rRNA + S-adenosyl-L-homocysteine + H(+). Catalyzes the formation of 5-methyl-uridine at position 1939 (m5U1939) in 23S rRNA. In Shewanella sp. (strain MR-7), this protein is 23S rRNA (uracil(1939)-C(5))-methyltransferase RlmD.